Here is a 305-residue protein sequence, read N- to C-terminus: Deoxyhypusine hydroxylase (305 aa).

2 HEAT-like PBS-type repeats span residues 54-80 (LKHELAYCLGQMQDESAIPTLEAVLKD) and 87-113 (VRHEAGEALGAIGNPKVLELLKKYAED). Fe cation is bound by residues H56, H89, and E90. Residues 137–160 (EQTKDGTDENPYCSVDPAPPAQRK) form a disordered region. HEAT-like PBS-type repeat units follow at residues 178 to 204 (DRYRAMFALRNLGTEEAVLALGDGLQC), 209 to 235 (FRHEIGYVLGQIQHEASIPQLQAALEK), and 242 to 268 (VRHECAEALGSIGKEPCVQILERYRKD). Residues H211, H244, and E245 each contribute to the Fe cation site.

The protein belongs to the deoxyhypusine hydroxylase family. Fe(2+) serves as cofactor.

It carries out the reaction [eIF5A protein]-deoxyhypusine + AH2 + O2 = [eIF5A protein]-hypusine + A + H2O. It participates in protein modification; eIF5A hypusination. In terms of biological role, catalyzes the hydroxylation of the N(6)-(4-aminobutyl)-L-lysine intermediate produced by deoxyhypusine synthase/DHPS on a critical lysine of the eukaryotic translation initiation factor 5A/eIF-5A. This is the second step of the post-translational modification of that lysine into an unusual amino acid residue named hypusine. Hypusination is unique to mature eIF-5A factor and is essential for its function. The polypeptide is Deoxyhypusine hydroxylase (dohh) (Danio rerio (Zebrafish)).